The sequence spans 352 residues: UDP-3-O-acylglucosamine N-acyltransferase (352 aa).

His244 (proton acceptor) is an active-site residue.

This sequence belongs to the transferase hexapeptide repeat family. LpxD subfamily. Homotrimer.

It carries out the reaction a UDP-3-O-[(3R)-3-hydroxyacyl]-alpha-D-glucosamine + a (3R)-hydroxyacyl-[ACP] = a UDP-2-N,3-O-bis[(3R)-3-hydroxyacyl]-alpha-D-glucosamine + holo-[ACP] + H(+). Its pathway is bacterial outer membrane biogenesis; LPS lipid A biosynthesis. Catalyzes the N-acylation of UDP-3-O-acylglucosamine using 3-hydroxyacyl-ACP as the acyl donor. Is involved in the biosynthesis of lipid A, a phosphorylated glycolipid that anchors the lipopolysaccharide to the outer membrane of the cell. This Anaeromyxobacter sp. (strain Fw109-5) protein is UDP-3-O-acylglucosamine N-acyltransferase.